We begin with the raw amino-acid sequence, 238 residues long: DNA damage-regulated autophagy modulator protein 1 (238 aa).

A run of 6 helical transmembrane segments spans residues 9–29 (AFVPFLLVTWSSAAFIISYVV), 53–73 (SGIFGFMINFSAFLGAATMYT), 91–111 (VFNLVSLVLGLVGCFGMGIVA), 116–136 (LAVPVVHDGGALLAFVCGVVY), 161–181 (MVISAVSCAAVIPMIVCASLI), and 200–220 (VSAICEWTVAFGFIFYFLTFI).

It belongs to the DRAM/TMEM150 family.

The protein resides in the lysosome membrane. In terms of biological role, lysosomal modulator of autophagy that plays a central role in p53/TP53-mediated apoptosis. Not involved in p73/TP73-mediated autophagy. This chain is DNA damage-regulated autophagy modulator protein 1 (DRAM1), found in Homo sapiens (Human).